Consider the following 874-residue polypeptide: Alanine--tRNA ligase (874 aa).

His562, His566, Cys664, and His668 together coordinate Zn(2+).

Belongs to the class-II aminoacyl-tRNA synthetase family. It depends on Zn(2+) as a cofactor.

It is found in the cytoplasm. It catalyses the reaction tRNA(Ala) + L-alanine + ATP = L-alanyl-tRNA(Ala) + AMP + diphosphate. In terms of biological role, catalyzes the attachment of alanine to tRNA(Ala) in a two-step reaction: alanine is first activated by ATP to form Ala-AMP and then transferred to the acceptor end of tRNA(Ala). Also edits incorrectly charged Ser-tRNA(Ala) and Gly-tRNA(Ala) via its editing domain. The chain is Alanine--tRNA ligase from Shewanella loihica (strain ATCC BAA-1088 / PV-4).